Consider the following 274-residue polypeptide: Large ribosomal subunit protein uL2 (274 aa).

Positions 197 to 274 (NSDHALEKSG…SKYIIERRKK (78 aa)) are disordered. Basic residues-rich tracts occupy residues 207 to 220 (KAGR…RPHN) and 244 to 274 (PRSR…RRKK).

Belongs to the universal ribosomal protein uL2 family. Part of the 50S ribosomal subunit. Forms a bridge to the 30S subunit in the 70S ribosome.

Functionally, one of the primary rRNA binding proteins. Required for association of the 30S and 50S subunits to form the 70S ribosome, for tRNA binding and peptide bond formation. It has been suggested to have peptidyltransferase activity; this is somewhat controversial. Makes several contacts with the 16S rRNA in the 70S ribosome. This Porphyromonas gingivalis (strain ATCC BAA-308 / W83) protein is Large ribosomal subunit protein uL2.